Here is a 201-residue protein sequence, read N- to C-terminus: Large ribosomal subunit protein uL4 (201 aa).

The interval 43-66 (TRAQKTRSEVSGGGKKPWRQKGTG) is disordered.

This sequence belongs to the universal ribosomal protein uL4 family. As to quaternary structure, part of the 50S ribosomal subunit.

In terms of biological role, one of the primary rRNA binding proteins, this protein initially binds near the 5'-end of the 23S rRNA. It is important during the early stages of 50S assembly. It makes multiple contacts with different domains of the 23S rRNA in the assembled 50S subunit and ribosome. Functionally, forms part of the polypeptide exit tunnel. The polypeptide is Large ribosomal subunit protein uL4 (Tolumonas auensis (strain DSM 9187 / NBRC 110442 / TA 4)).